Reading from the N-terminus, the 236-residue chain is MLSTLIRRLSRALLWFVAGSIVLVLVFRWVPPPGTALMVERKVQSWVNGEPIDLQRDWEPWENISDELKVAVIAGEDQKFANHWGFDLPAIQAALAHNERGGNIRGASTLTQQVAKNLFLWSGRSWFRKGLEAWFTALIELFWSKERILEVYLNSAEWGKGVFGAQAAARYHFGVDASRLSRQQAAQLAAVLPSPIKWSASRPSAYVASRAGWIRRQMSQLGGPSYLMQLDSSRKL.

The helical transmembrane segment at 12 to 31 threads the bilayer; sequence ALLWFVAGSIVLVLVFRWVP.

Belongs to the glycosyltransferase 51 family.

The protein resides in the cell inner membrane. The catalysed reaction is [GlcNAc-(1-&gt;4)-Mur2Ac(oyl-L-Ala-gamma-D-Glu-L-Lys-D-Ala-D-Ala)](n)-di-trans,octa-cis-undecaprenyl diphosphate + beta-D-GlcNAc-(1-&gt;4)-Mur2Ac(oyl-L-Ala-gamma-D-Glu-L-Lys-D-Ala-D-Ala)-di-trans,octa-cis-undecaprenyl diphosphate = [GlcNAc-(1-&gt;4)-Mur2Ac(oyl-L-Ala-gamma-D-Glu-L-Lys-D-Ala-D-Ala)](n+1)-di-trans,octa-cis-undecaprenyl diphosphate + di-trans,octa-cis-undecaprenyl diphosphate + H(+). It functions in the pathway cell wall biogenesis; peptidoglycan biosynthesis. Functionally, peptidoglycan polymerase that catalyzes glycan chain elongation from lipid-linked precursors. The chain is Biosynthetic peptidoglycan transglycosylase from Pseudomonas putida (strain ATCC 700007 / DSM 6899 / JCM 31910 / BCRC 17059 / LMG 24140 / F1).